The following is a 695-amino-acid chain: MKVFCGRANPTTGSVEWLEEDEHYDYHQEIARSSYADMLHDKDRNMKYYQGIRAAVSRVKDRGQKALVLDIGTGTGLLSMMAVTAGADFCYAIEVFKPMADAAVKIVEKNGFSDKIKVINKHSTEVTVGPDGDMPCRANILITELFDTELIGEGALPSYEHAHRHLVQANCEAVPHRATVYAQLVESRRMWSWNKLFPIRVQTSRGERVIIPPLELERCPGAPSVCDIQLNQVSPADFTILSDVLPMFSVDFSKQVSSSAACHSRQFEPLVSGRAQVVLSWWDIEMDPEGKIKCTMAPSWAHSDPEELQWRDHWMQCVYFLPQEEPVVQGLALCLVAYHDDYCVWYSLQKTSPEKNGRVHPVRPVCDCQAHLLWNRPRFGEINDRNRTDQYIQALRTVLKPDSVCLCVSDGSLLSMLAYHLGVEQVFTIENSAVSHRLMKKIFKANHLEDKINIIEKRPELLTPADLEGKKVSLLLGEPFFTTSLLPWHNLYFWYVRTAVDQHLGPGAVVMPQAASLHVVVVEFRDLWRIRSPCGDCEGFDVHIMDDMIKRALDFRESKEAEPHPLWEYPCSSLSEPQQILTFDFRQPVPLQPIHAEGTIELRRCGRSHGAVLWMEYHLTADSTVSTGLLKSAEDEGDCCWNPHCKQAVYFFNTTLDPRAPPGSSQTVTYTVEFHPHTGDITMDFTLSDALDSGC.

2 SAM-dependent MTase PRMT-type domains span residues 14 to 345 (SVEW…YCVW) and 358 to 684 (RVHP…ITMD). At arginine 32 the chain carries Omega-N-methylarginine. Active-site residues include glutamate 144 and glutamate 153.

It belongs to the class I-like SAM-binding methyltransferase superfamily. Protein arginine N-methyltransferase family. PRMT7 subfamily. As to quaternary structure, homodimer and heterodimer. Interacts with CTCFL, PRMT5 and SNRPD3.

It is found in the cytoplasm. The protein localises to the cytosol. It localises to the nucleus. The enzyme catalyses L-arginyl-[protein] + S-adenosyl-L-methionine = N(omega)-methyl-L-arginyl-[protein] + S-adenosyl-L-homocysteine + H(+). Its function is as follows. Arginine methyltransferase that can both catalyze the formation of omega-N monomethylarginine (MMA) and symmetrical dimethylarginine (sDMA), with a preference for the formation of MMA. Specifically mediates the symmetrical dimethylation of arginine residues in the small nuclear ribonucleoproteins Sm D1 (SNRPD1) and Sm D3 (SNRPD3); such methylation being required for the assembly and biogenesis of snRNP core particles. Specifically mediates the symmetric dimethylation of histone H4 'Arg-3' to form H4R3me2s. Plays a role in gene imprinting by being recruited by CTCFL at the H19 imprinted control region (ICR) and methylating histone H4 to form H4R3me2s, possibly leading to recruit DNA methyltransferases at these sites. May also play a role in embryonic stem cell (ESC) pluripotency. Also able to mediate the arginine methylation of histone H2A and myelin basic protein (MBP) in vitro; the relevance of such results is however unclear in vivo. The polypeptide is Protein arginine N-methyltransferase 7 (PRMT7) (Bos taurus (Bovine)).